The sequence spans 1024 residues: Beta-galactosidase (1024 aa).

Substrate-binding residues include asparagine 103 and aspartate 202. Aspartate 202 contacts Na(+). Positions 417, 419, and 462 each coordinate Mg(2+). Residues glutamate 462 and 538-541 contribute to the substrate site; that span reads EYAH. The active-site Proton donor is the glutamate 462. Catalysis depends on glutamate 538, which acts as the Nucleophile. Residue asparagine 598 participates in Mg(2+) binding. Na(+)-binding residues include phenylalanine 602 and asparagine 605. Residues asparagine 605 and tryptophan 1000 each coordinate substrate.

It belongs to the glycosyl hydrolase 2 family. In terms of assembly, homotetramer. The cofactor is Mg(2+). Na(+) is required as a cofactor.

The catalysed reaction is Hydrolysis of terminal non-reducing beta-D-galactose residues in beta-D-galactosides.. This chain is Beta-galactosidase, found in Shigella dysenteriae serotype 1 (strain Sd197).